The primary structure comprises 221 residues: H-2 class II histocompatibility antigen, A-Q alpha chain (221 aa).

The alpha-1 stretch occupies residues 1–76; sequence GIVVYQSPGD…KRSNFTPATN (76 aa). Residues 1–183 lie on the Extracellular side of the membrane; it reads GIVVYQSPGD…IPAPMSELTE (183 aa). The segment at 77–170 is alpha-2; sequence EAPQATVFPK…GLDEPVLKHW (94 aa). The Ig-like C1-type domain occupies 79 to 171; it reads PQATVFPKSP…LDEPVLKHWE (93 aa). C99 and C155 form a disulfide bridge. N110 carries an N-linked (GlcNAc...) asparagine glycan. A connecting peptide region spans residues 171–183; sequence EPEIPAPMSELTE. Residues 184–209 traverse the membrane as a helical segment; that stretch reads TVVCALGLSVGLVGIVVGTIFIIQGL. The Cytoplasmic portion of the chain corresponds to 210-221; sequence RSGGTSRPPGPL.

It belongs to the MHC class II family.

The protein resides in the membrane. The polypeptide is H-2 class II histocompatibility antigen, A-Q alpha chain (H2-Aa) (Mus musculus (Mouse)).